The primary structure comprises 209 residues: Small ribosomal subunit protein uS3 (209 aa).

The KH type-2 domain occupies 38-107 (IRKVVKNAYS…RVIVNVEEIK (70 aa)).

The protein belongs to the universal ribosomal protein uS3 family. Part of the 30S ribosomal subunit. Forms a tight complex with proteins S10 and S14.

Functionally, binds the lower part of the 30S subunit head. Binds mRNA in the 70S ribosome, positioning it for translation. The chain is Small ribosomal subunit protein uS3 from Pseudothermotoga lettingae (strain ATCC BAA-301 / DSM 14385 / NBRC 107922 / TMO) (Thermotoga lettingae).